Reading from the N-terminus, the 1397-residue chain is Ankyrin repeat domain-containing protein 30A (1397 aa).

ANK repeat units lie at residues 72 to 101, 105 to 134, 138 to 167, 171 to 200, 204 to 233, and 237 to 271; these read QKRT…QLDV, EHRT…DINL, YGNT…VIEV, ASLT…NANA, YKCT…DVFA, and CGVT…HQNT. The segment covering 267 to 279 has biased composition (polar residues); the sequence is NHQNTNPEGTSAG. Disordered stretches follow at residues 267 to 376, 453 to 482, 782 to 807, and 902 to 931; these read NHQN…TWPA, PTKE…EYSC, QTLR…WDSE, and TLRA…LRET. Composition is skewed to basic and acidic residues over residues 290–304 and 312–326; these read RTPD…KTPD. Residues 455–467 show a composition bias toward polar residues; sequence KESSTKASANDQR. Composition is skewed to basic and acidic residues over residues 782 to 800 and 913 to 931; these read QTLR…KDYE and SKQK…LRET. 2 coiled-coil regions span residues 998–1188 and 1282–1327; these read VLKK…KQDK and EHAQ…FQLQ.

In terms of tissue distribution, mainly expressed in breast and testis. A very faint signal is detected in placenta. Also expressed in many breast cancer cells.

The sequence is that of Ankyrin repeat domain-containing protein 30A (ANKRD30A) from Homo sapiens (Human).